Here is a 153-residue protein sequence, read N- to C-terminus: Large ribosomal subunit protein bL9 (153 aa).

Belongs to the bacterial ribosomal protein bL9 family.

Binds to the 23S rRNA. This is Large ribosomal subunit protein bL9 from Synechococcus sp. (strain JA-3-3Ab) (Cyanobacteria bacterium Yellowstone A-Prime).